The sequence spans 78 residues: Acyl carrier protein (78 aa).

A Carrier domain is found at 2 to 77 (SNIEERVKKI…AAIDYVTSNA (76 aa)). Position 37 is an O-(pantetheine 4'-phosphoryl)serine (S37).

It belongs to the acyl carrier protein (ACP) family. In terms of processing, 4'-phosphopantetheine is transferred from CoA to a specific serine of apo-ACP by AcpS. This modification is essential for activity because fatty acids are bound in thioester linkage to the sulfhydryl of the prosthetic group.

The protein localises to the cytoplasm. It participates in lipid metabolism; fatty acid biosynthesis. Functionally, carrier of the growing fatty acid chain in fatty acid biosynthesis. This Vibrio cholerae serotype O1 (strain ATCC 39315 / El Tor Inaba N16961) protein is Acyl carrier protein.